Reading from the N-terminus, the 267-residue chain is uncharacterized protein (267 aa).

Residues 30–52 form a helical membrane-spanning segment; it reads FMRIFLLFLFFVLFTFGVEGYVI.

It is found in the membrane. This is an uncharacterized protein from Aquifex aeolicus (strain VF5).